The primary structure comprises 358 residues: DNA polymerase IV (358 aa).

In terms of domain architecture, UmuC spans 4-185 (IIHVDMDCFY…LPLIKIPGVG (182 aa)). Mg(2+) is bound by residues Asp8 and Asp103. The active site involves Glu104.

It belongs to the DNA polymerase type-Y family. Monomer. Mg(2+) is required as a cofactor.

The protein resides in the cytoplasm. It catalyses the reaction DNA(n) + a 2'-deoxyribonucleoside 5'-triphosphate = DNA(n+1) + diphosphate. Functionally, poorly processive, error-prone DNA polymerase involved in untargeted mutagenesis. Copies undamaged DNA at stalled replication forks, which arise in vivo from mismatched or misaligned primer ends. These misaligned primers can be extended by PolIV. Exhibits no 3'-5' exonuclease (proofreading) activity. May be involved in translesional synthesis, in conjunction with the beta clamp from PolIII. This is DNA polymerase IV from Shewanella pealeana (strain ATCC 700345 / ANG-SQ1).